An 88-amino-acid polypeptide reads, in one-letter code: Small ribosomal subunit protein bS20 (88 aa).

Disordered regions lie at residues 1-25 (MANSPQAKKRARQNERRFAINKARR) and 61-88 (GVTKGVMHKNTAARKMSRLSSRVKALGA).

This sequence belongs to the bacterial ribosomal protein bS20 family.

Its function is as follows. Binds directly to 16S ribosomal RNA. The polypeptide is Small ribosomal subunit protein bS20 (Jannaschia sp. (strain CCS1)).